The following is an 836-amino-acid chain: Hypoxia-inducible factor 1-alpha (836 aa).

Residues 1-30 (MEGAGGENEKKKMSSERRKEKSRDAARSRR) are disordered. Residues 1–401 (MEGAGGENEK…KEPDALTLLA (401 aa)) are interaction with TSGA10. Basic and acidic residues predominate over residues 7–30 (ENEKKKMSSERRKEKSRDAARSRR). Positions 17 to 70 (RRKEKSRDAARSRRSKESEVFYELAHQLPLPHNVSSHLDKASVMRLTISYLRVR) constitute a bHLH domain. Positions 21-30 (KSRDAARSRR) are DNA-binding. Positions 80–155 (SEDEMKAQMD…EMLTHRNGPV (76 aa)) constitute a PAS 1 domain. The tract at residues 170 to 191 (RMKCTLTSRGRTMNIKSATWKV) is required for heterodimer formation with ARNT. The region spanning 228-298 (PHPSNIEIPL…KTHHDMFTKG (71 aa)) is the PAS 2 domain. Ser247 is subject to Phosphoserine; by CK1. The PAC domain maps to 302 to 345 (TGQYRMLAKRGGYVWVETQATVIYNTKNSQPQCIVCVNYVVSGI). An N-terminal VHL recognition site region spans residues 380–417 (SEDTSCLFDKLKKEPDALTLLAPAAGDTIISLDFGSDD). Lys391 is covalently cross-linked (Glycyl lysine isopeptide (Lys-Gly) (interchain with G-Cter in SUMO)). Residues 401-613 (APAAGDTIIS…PSMSTVTGFQ (213 aa)) are ODD. Pro402 is modified (4-hydroxyproline). Lys476 is covalently cross-linked (Glycyl lysine isopeptide (Lys-Gly) (interchain with G-Cter in SUMO)). Positions 492–511 (QIQDQPASPSDGSTRQSSPE) are disordered. The tract at residues 544–588 (FKLELVEKLFAEDTEAKNPFSTQDTDLDLEMLAPYIPMDDDFQLR) is NTAD. Residue Lys545 is modified to N6-acetyllysine; alternate. Glycyl lysine isopeptide (Lys-Gly) (interchain with G-Cter in ubiquitin) cross-links involve residues Lys545, Lys551, and Lys560. A Glycyl lysine isopeptide (Lys-Gly) (interchain with G-Cter in ubiquitin); alternate cross-link involves residue Lys545. Ser564 is subject to Phosphoserine; by GSK3-beta. Thr568 is subject to Phosphothreonine; by GSK3-beta. Residues 569 to 585 (DLDLEMLAPYIPMDDDF) form a C-terminal VHL recognition site region. Pro577 is modified (4-hydroxyproline). Ser589 carries the phosphoserine; by PLK3 modification. Positions 589-795 (SFDQLSPLES…SDLACRLLGQ (207 aa)) are ID. 2 disordered regions span residues 593 to 684 (LSPL…DRAG) and 707 to 734 (QRNT…KMEH). Ser602 bears the Phosphoserine; by GSK3-beta mark. The span at 608-620 (TVTGFQQTQLQKP) shows a compositional bias: polar residues. Positions 621–632 (TITATATTTATT) are enriched in low complexity. Over residues 633-647 (DESKTETKDNKEDIK) the composition is skewed to basic and acidic residues. The span at 652-678 (SPSSTQVPQETTTAKASAYSGTHSRTA) shows a compositional bias: polar residues. Ser668 carries the phosphoserine; by PLK3 modification. Lys719 carries the N6-acetyllysine modification. A Nuclear localization signal motif is present at residues 728–731 (RKRK). The interval 796–836 (SMDESGLPQLTSYDCEVNAPIQGSRNLLQGEELLRALDQVN) is CTAD. Residue Cys810 is modified to S-nitrosocysteine. Asn813 is subject to (3S)-3-hydroxyasparagine.

Interacts with the ARNT; forms a heterodimer that binds core DNA sequence 5'-TACGTG-3' within the hypoxia response element (HRE) of target gene promoters. Interacts with COPS5; the interaction increases the transcriptional activity of HIF1A through increased stability. Interacts with EP300 (via TAZ-type 1 domains); the interaction is stimulated in response to hypoxia and inhibited by CITED2. Interacts with CREBBP (via TAZ-type 1 domains). Interacts with NCOA1, NCOA2, APEX1 and HSP90. Interacts (hydroxylated within the ODD domain) with VHLL (via beta domain); the interaction, leads to polyubiquitination and subsequent HIF1A proteasomal degradation. During hypoxia, sumoylated HIF1A also binds VHL; the interaction promotes the ubiquitination of HIF1A. Interacts with SENP1; the interaction desumoylates HIF1A resulting in stabilization and activation of transcription. Interacts (via the ODD domain) with NAA10; the interaction appears not to acetylate HIF1A nor have any affect on protein stability, during hypoxia. Interacts with RWDD3; the interaction enhances HIF1A sumoylation. Interacts with TSGA10. Interacts with HIF3A. Interacts with RORA (via the DNA binding domain); the interaction enhances HIF1A transcription under hypoxia through increasing protein stability. Interaction with PSMA7 inhibits the transactivation activity of HIF1A under both normoxic and hypoxia-mimicking conditions. Interacts with USP20. Interacts with RACK1; promotes HIF1A ubiquitination and proteasome-mediated degradation. Interacts (via N-terminus) with USP19. Interacts with SIRT2. Interacts (deacetylated form) with EGLN1. Interacts with CBFA2T3. Interacts with HSP90AA1 and HSP90AB1. Interacts with DCUN1D1; this interaction increases the interaction between VHL and DCUN1D1. Interacts with HIF1AN. S-nitrosylation of Cys-810 may be responsible for increased recruitment of p300 coactivator necessary for transcriptional activity of HIF-1 complex. In terms of processing, requires phosphorylation for DNA-binding. Phosphorylation at Ser-247 by CSNK1D/CK1 represses kinase activity and impairs ARNT binding. Phosphorylation by GSK3-beta and PLK3 promote degradation by the proteasome. Post-translationally, sumoylated; with SUMO1 under hypoxia. Sumoylation is enhanced through interaction with RWDD3. Both sumoylation and desumoylation seem to be involved in the regulation of its stability during hypoxia. Sumoylation can promote either its stabilization or its VHL-dependent degradation by promoting hydroxyproline-independent HIF1A-VHL complex binding, thus leading to HIF1A ubiquitination and proteasomal degradation. Desumoylation by SENP1 increases its stability amd transcriptional activity. There is a disaccord between various publications on the effect of sumoylation and desumoylation on its stability and transcriptional activity. Acetylation of Lys-545 by ARD1 increases interaction with VHL and stimulates subsequent proteasomal degradation. Deacetylation of Lys-719 by SIRT2 increases its interaction with and hydroxylation by EGLN1 thereby inactivating HIF1A activity by inducing its proteasomal degradation. In terms of processing, ubiquitinated; in normoxia, following hydroxylation and interaction with VHL. Lys-545 appears to be the principal site of ubiquitination. Clioquinol, the Cu/Zn-chelator, inhibits ubiquitination through preventing hydroxylation at Asn-813. Ubiquitinated by E3 ligase VHL. Deubiquitinated by UCHL1. Post-translationally, the iron and 2-oxoglutarate dependent 3-hydroxylation of asparagine is (S) stereospecific within HIF CTAD domains. In normoxia, is hydroxylated on Pro-402 and Pro-577 in the oxygen-dependent degradation domain (ODD) by EGLN1/PHD2 and EGLN2/PHD1. EGLN3/PHD3 has also been shown to hydroxylate Pro-577. The hydroxylated prolines promote interaction with VHL, initiating rapid ubiquitination and subsequent proteasomal degradation. Deubiquitinated by USP20. Under hypoxia, proline hydroxylation is impaired and ubiquitination is attenuated, resulting in stabilization. In normoxia, is hydroxylated on Asn-813 by HIF1AN, thus abrogating interaction with CREBBP and EP300 and preventing transcriptional activation. Repressed by iron ion, via Fe(2+) prolyl hydroxylase (PHD) enzymes-mediated hydroxylation and subsequent proteasomal degradation. In terms of tissue distribution, ubiquitous.

The protein resides in the cytoplasm. It localises to the nucleus. Its subcellular location is the nucleus speckle. Induced by reactive oxygen species (ROS). Its function is as follows. Functions as a master transcriptional regulator of the adaptive response to hypoxia. Under hypoxic conditions, activates the transcription of over 40 genes, including erythropoietin, glucose transporters, glycolytic enzymes, vascular endothelial growth factor, HILPDA, and other genes whose protein products increase oxygen delivery or facilitate metabolic adaptation to hypoxia. Plays an essential role in embryonic vascularization, tumor angiogenesis and pathophysiology of ischemic disease. Heterodimerizes with ARNT; heterodimer binds to core DNA sequence 5'-TACGTG-3' within the hypoxia response element (HRE) of target gene promoters. Activation requires recruitment of transcriptional coactivators such as CREBBP and EP300. Activity is enhanced by interaction with NCOA1 and/or NCOA2. Interaction with redox regulatory protein APEX1 seems to activate CTAD and potentiates activation by NCOA1 and CREBBP. Involved in the axonal distribution and transport of mitochondria in neurons during hypoxia. The sequence is that of Hypoxia-inducible factor 1-alpha (Hif1a) from Mus musculus (Mouse).